Consider the following 667-residue polypeptide: Transcription factor 4 (667 aa).

Residues 1 to 83 (MHHQQRMAAL…GTPYDHMTSR (83 aa)) are essential for MYOD1 inhibition. Residues 18-26 (DLLDFSAMF) carry the 9aaTAD motif. Disordered stretches follow at residues 24-245 (AMFS…LGNS), 263-321 (LSYP…SQTG), 336-379 (HTNN…EGPL), 466-570 (SLLP…MANN), and 634-667 (KRRE…MGQM). The segment covering 29–49 (PVSSGKNGPTSLASGHFTGSN) has biased composition (polar residues). Ser-66, Ser-87, and Ser-92 each carry phosphoserine. Composition is skewed to polar residues over residues 107–126 (GSYS…QQSL), 137–155 (GTLS…SSNN), 205–216 (KPATSTFPSSFF), and 266–306 (PSHS…TDSI). A compositionally biased stretch (low complexity) spans 337–348 (TNNSFSSNPSTP). The span at 365 to 374 (NGGQASSSPN) shows a compositional bias: polar residues. Ser-372 carries the post-translational modification Phosphoserine. Positions 379–400 (LHSLQSRIEDRLERLDDAIHVL) are leucine-zipper. Low complexity-rich tracts occupy residues 467–480 (LLPN…LPVQ) and 503–512 (GQSVSSGSSE). Ser-515 carries the post-translational modification Phosphoserine. Basic and acidic residues-rich tracts occupy residues 527–542 (KSSE…KDIK) and 555–570 (PEQK…MANN). One can recognise a bHLH domain in the interval 564–617 (ERRMANNARERLRVRDINEAFKELGRMVQLHLKSDKPQTKLLILHQAVAVILSL). The tract at residues 619–642 (QQVRERNLNPKAACLKRREEEKVS) is class A specific domain.

In terms of assembly, efficient DNA binding requires dimerization with another bHLH protein. Forms homo- or heterooligomers with myogenin. Interacts with HIVEP2. Interacts with NEUROD2. Interacts with AGBL1. Interacts with BHLHA9. In terms of tissue distribution, expressed in adult heart, brain, placenta, skeletal muscle and to a lesser extent in the lung. In developing embryonic tissues, expression mostly occurs in the brain.

It is found in the nucleus. Transcription factor that binds to the immunoglobulin enhancer Mu-E5/KE5-motif. Involved in the initiation of neuronal differentiation. Activates transcription by binding to the E box (5'-CANNTG-3'). Binds to the E-box present in the somatostatin receptor 2 initiator element (SSTR2-INR) to activate transcription. Preferentially binds to either 5'-ACANNTGT-3' or 5'-CCANNTGG-3'. The sequence is that of Transcription factor 4 (TCF4) from Homo sapiens (Human).